Here is an 89-residue protein sequence, read N- to C-terminus: RNA-binding protein Hfq (89 aa).

The 60-residue stretch at 14–73 (DPYLNALRKEKINVAIYLVNGVKLQGRVDSFDQFVVLLRSNVTQMVYKHAISTIVPARDP) folds into the Sm domain.

Belongs to the Hfq family. In terms of assembly, homohexamer.

RNA chaperone that binds small regulatory RNA (sRNAs) and mRNAs to facilitate mRNA translational regulation in response to envelope stress, environmental stress and changes in metabolite concentrations. Also binds with high specificity to tRNAs. The polypeptide is RNA-binding protein Hfq (Hydrogenovibrio crunogenus (strain DSM 25203 / XCL-2) (Thiomicrospira crunogena)).